A 103-amino-acid chain; its full sequence is Small ribosomal subunit protein uS10 (103 aa).

The protein belongs to the universal ribosomal protein uS10 family. Part of the 30S ribosomal subunit.

Involved in the binding of tRNA to the ribosomes. The polypeptide is Small ribosomal subunit protein uS10 (Alcanivorax borkumensis (strain ATCC 700651 / DSM 11573 / NCIMB 13689 / SK2)).